Reading from the N-terminus, the 174-residue chain is Pectinesterase inhibitor 12 (174 aa).

The N-terminal stretch at M1–A20 is a signal peptide. Disulfide bonds link C28–C43 and C100–C140. Residue N129 is glycosylated (N-linked (GlcNAc...) asparagine).

Belongs to the PMEI family.

It is found in the secreted. The protein localises to the extracellular space. It localises to the apoplast. Its function is as follows. Pectin methylesterase (PME) inhibitor involved in the maintenance of cell wall integrity in response to necrotrophic pathogens. Modulates PME activity and pectin methylesterification during infection by Botrytis cinerea and contributes to resistance against the pathogen. The sequence is that of Pectinesterase inhibitor 12 from Arabidopsis thaliana (Mouse-ear cress).